Here is a 119-residue protein sequence, read N- to C-terminus: Microtubule nucleation factor SSNA1 (119 aa).

An N-acetylthreonine modification is found at Thr-2. Residues 2 to 32 (TQQGAALQNYNNELVKCIEELCQKREELCRQ) form an important for localization to the centrosome region. A coiled-coil region spans residues 13 to 70 (NELVKCIEELCQKREELCRQIQQEEDEKQRLQNEVRQLTEKLARVNENLARKIASRNE).

This sequence belongs to the SSNA1 family. In terms of assembly, self-associates to form fibrils. Also forms dimers as well as monomers. Interacts with SPAST.

It is found in the nucleus. The protein localises to the cytoplasm. It localises to the cytoskeleton. Its subcellular location is the microtubule organizing center. The protein resides in the centrosome. It is found in the centriole. The protein localises to the midbody. It localises to the flagellum basal body. Its subcellular location is the flagellum axoneme. The protein resides in the cell projection. It is found in the axon. Functionally, microtubule-binding protein which stabilizes dynamic microtubules by slowing growth and shrinkage at both plus and minus ends and serves as a sensor of microtubule damage, protecting microtubules from the microtubule-severing enzyme SPAST. Induces microtubule branching which is mediated by the formation of long SSNA1 fibrils which guide microtubule protofilaments to split apart from the mother microtubule and form daughter microtubules. Plays a role in axon outgrowth and branching. Required for cell division. The polypeptide is Microtubule nucleation factor SSNA1 (Mus musculus (Mouse)).